Reading from the N-terminus, the 178-residue chain is TM2 domain-containing protein biscotti (178 aa).

The first 18 residues, 1-18 (MFPVLLLLLFFFAKETHQ), serve as a signal peptide directing secretion. Topologically, residues 19–99 (INVDCNELQM…YHLDTTLLLS (81 aa)) are extracellular. Asn69 and Asn75 each carry an N-linked (GlcNAc...) asparagine glycan. Residues 94–137 (TTLLLSVFLGMFGVDRFYLGYPGIGLLKFCTLGGMFLGQLIDIV) form the TM2 domain. The chain crosses the membrane as a helical span at residues 100–120 (VFLGMFGVDRFYLGYPGIGLL). Residues 121–124 (KFCT) lie on the Cytoplasmic side of the membrane. Residues 125 to 145 (LGGMFLGQLIDIVLIALQVVG) traverse the membrane as a helical segment. The Extracellular portion of the chain corresponds to 146-178 (PADGSAYVIPYYGAGIHIVRSDNTTYRLPRDDW). An N-linked (GlcNAc...) asparagine glycan is attached at Asn168.

This sequence belongs to the TM2 family.

The protein localises to the membrane. Positive regulator of Notch signaling. Maternal neurogenic factor involved in Notch signaling-dependent neuroectodermal specification during early embryogenesis. Functions cooperatively with amx/TM2D3 and amrt/TM2D2. This Drosophila melanogaster (Fruit fly) protein is TM2 domain-containing protein biscotti.